The chain runs to 210 residues: 2-hydroxy-3-keto-5-methylthiopentenyl-1-phosphate phosphatase (210 aa).

This sequence belongs to the HAD-like hydrolase superfamily. MtnX family.

It catalyses the reaction 2-hydroxy-5-methylsulfanyl-3-oxopent-1-enyl phosphate + H2O = 1,2-dihydroxy-5-(methylsulfanyl)pent-1-en-3-one + phosphate. The protein operates within amino-acid biosynthesis; L-methionine biosynthesis via salvage pathway; L-methionine from S-methyl-5-thio-alpha-D-ribose 1-phosphate: step 4/6. Functionally, dephosphorylates 2-hydroxy-3-keto-5-methylthiopentenyl-1-phosphate (HK-MTPenyl-1-P) yielding 1,2-dihydroxy-3-keto-5-methylthiopentene (DHK-MTPene). This Microcystis aeruginosa (strain NIES-843 / IAM M-2473) protein is 2-hydroxy-3-keto-5-methylthiopentenyl-1-phosphate phosphatase.